Consider the following 340-residue polypeptide: MKSLVKAKKEPGIWMQDVPVPEYGVNDVLIKIKRTAICGTDIHIYSWDEWAQATIPVPMTVGHEFYGEIVEVGKEVQGLKVGQRVSGEGHITCGFCRNCRAGKRHLCRNTLGVGVNRPGCFAEYLALPATNVIALPDNITEEQAAILDPFGNAAHCALAFDVVGEDVLITGAGPIGIMAAAIVRHIGARHVVITDVNDHRLELARQMGVSRAVNVKYQKLSDVANELGMLEGFDVGLEMSGNPMALNDMMKAMNHGGHVALLGIPPQETPIDWNQVIFKGLVIKGIYGREMFETWYKMIAMLQSGLNISPVITHNFPVDEYQHAFQIMASGQSGKVILNW.

C38 contributes to the Zn(2+) binding site. Residues T40 and H43 each act as charge relay system in the active site. Residues H63, E64, C93, C96, C99, and C107 each contribute to the Zn(2+) site. Residues I175, D195, R200, 262 to 264 (LGI), and 286 to 287 (IY) each bind NAD(+).

The protein belongs to the zinc-containing alcohol dehydrogenase family. Homotetramer. The cofactor is Zn(2+).

The protein resides in the cytoplasm. The catalysed reaction is L-threonine + NAD(+) = (2S)-2-amino-3-oxobutanoate + NADH + H(+). It participates in amino-acid degradation; L-threonine degradation via oxydo-reductase pathway; glycine from L-threonine: step 1/2. Functionally, catalyzes the NAD(+)-dependent oxidation of L-threonine to 2-amino-3-ketobutyrate. The polypeptide is L-threonine 3-dehydrogenase (Legionella pneumophila (strain Corby)).